We begin with the raw amino-acid sequence, 57 residues long: uncharacterized protein (57 aa).

The helical transmembrane segment at 34–54 (AALLDAAALVVIPGLLTAAAV) threads the bilayer.

It is found in the membrane. This is an uncharacterized protein from Dictyostelium discoideum (Social amoeba).